The sequence spans 154 residues: Egg-lysin (154 aa).

The N-terminal stretch at 1 to 18 (MKLFVLCIFAMMATLAMS) is a signal peptide.

Homodimer. In terms of tissue distribution, sperm.

In terms of biological role, dissolves the egg vitelline layer nonenzymatically during fertilization. It creates a hole of about 3 mu-m in diameter through which the sperm pass. The chain is Egg-lysin from Haliotis kamtschatkana (Pinto abalone).